Consider the following 361-residue polypeptide: Alanine racemase (361 aa).

K35 (proton acceptor; specific for D-alanine) is an active-site residue. N6-(pyridoxal phosphate)lysine is present on K35. R130 lines the substrate pocket. The active-site Proton acceptor; specific for L-alanine is the Y257. Residue M305 participates in substrate binding.

This sequence belongs to the alanine racemase family. Pyridoxal 5'-phosphate serves as cofactor.

The catalysed reaction is L-alanine = D-alanine. It participates in amino-acid biosynthesis; D-alanine biosynthesis; D-alanine from L-alanine: step 1/1. In terms of biological role, catalyzes the interconversion of L-alanine and D-alanine. May also act on other amino acids. This is Alanine racemase (alr) from Nitrosomonas eutropha (strain DSM 101675 / C91 / Nm57).